A 251-amino-acid chain; its full sequence is 2,3-bisphosphoglycerate-dependent phosphoglycerate mutase (251 aa).

Substrate is bound by residues 11–18 (RHGNSDWN), 24–25 (TG), arginine 63, 90–93 (ERHY), lysine 101, 117–118 (RR), and 185–186 (GN). Histidine 12 functions as the Tele-phosphohistidine intermediate in the catalytic mechanism. Glutamate 90 serves as the catalytic Proton donor/acceptor. The interval 117 to 142 (RRSFDVPPPPIDDDDEYSQSRDPRYA) is disordered.

Belongs to the phosphoglycerate mutase family. BPG-dependent PGAM subfamily.

It carries out the reaction (2R)-2-phosphoglycerate = (2R)-3-phosphoglycerate. It participates in carbohydrate degradation; glycolysis; pyruvate from D-glyceraldehyde 3-phosphate: step 3/5. In terms of biological role, catalyzes the interconversion of 2-phosphoglycerate and 3-phosphoglycerate. This Clavibacter michiganensis subsp. michiganensis (strain NCPPB 382) protein is 2,3-bisphosphoglycerate-dependent phosphoglycerate mutase.